We begin with the raw amino-acid sequence, 153 residues long: D-aminoacyl-tRNA deacylase (153 aa).

A Gly-cisPro motif, important for rejection of L-amino acids motif is present at residues 140-141 (GP).

The protein belongs to the DTD family. In terms of assembly, homodimer.

The protein localises to the cytoplasm. It carries out the reaction glycyl-tRNA(Ala) + H2O = tRNA(Ala) + glycine + H(+). The enzyme catalyses a D-aminoacyl-tRNA + H2O = a tRNA + a D-alpha-amino acid + H(+). Its function is as follows. An aminoacyl-tRNA editing enzyme that deacylates mischarged D-aminoacyl-tRNAs. Also deacylates mischarged glycyl-tRNA(Ala), protecting cells against glycine mischarging by AlaRS. Acts via tRNA-based rather than protein-based catalysis; rejects L-amino acids rather than detecting D-amino acids in the active site. By recycling D-aminoacyl-tRNA to D-amino acids and free tRNA molecules, this enzyme counteracts the toxicity associated with the formation of D-aminoacyl-tRNA entities in vivo and helps enforce protein L-homochirality. The sequence is that of D-aminoacyl-tRNA deacylase from Trichodesmium erythraeum (strain IMS101).